The primary structure comprises 352 residues: SNF1-related protein kinase regulatory subunit gamma-like PV42a (352 aa).

CBS domains lie at 24–106 (RNRR…LSDL), 122–196 (LEGL…FDDL), 210–281 (VNDS…ELQT), and 297–352 (KERE…STLS).

Belongs to the 5'-AMP-activated protein kinase gamma subunit family. As to expression, expressed highly in rosette leaves, cauline leaves, open flowers, developing siliques and dry seeds, but at a low level in stems and floral buds.

Functionally, plays redundant role with PV42b in regulating male gametogenesis and pollen tube guidance. The chain is SNF1-related protein kinase regulatory subunit gamma-like PV42a (PV42A) from Arabidopsis thaliana (Mouse-ear cress).